A 94-amino-acid chain; its full sequence is Small ribosomal subunit protein bS18 (94 aa).

It belongs to the bacterial ribosomal protein bS18 family. In terms of assembly, part of the 30S ribosomal subunit. Forms a tight heterodimer with protein bS6.

In terms of biological role, binds as a heterodimer with protein bS6 to the central domain of the 16S rRNA, where it helps stabilize the platform of the 30S subunit. The sequence is that of Small ribosomal subunit protein bS18 from Polaromonas naphthalenivorans (strain CJ2).